A 544-amino-acid polypeptide reads, in one-letter code: Chaperonin GroEL (544 aa).

ATP-binding positions include 30–33 (TLGP), Lys-51, 87–91 (DGTTT), Gly-415, 479–481 (NAA), and Asp-495.

Belongs to the chaperonin (HSP60) family. Forms a cylinder of 14 subunits composed of two heptameric rings stacked back-to-back. Interacts with the co-chaperonin GroES.

It is found in the cytoplasm. It catalyses the reaction ATP + H2O + a folded polypeptide = ADP + phosphate + an unfolded polypeptide.. Functionally, together with its co-chaperonin GroES, plays an essential role in assisting protein folding. The GroEL-GroES system forms a nano-cage that allows encapsulation of the non-native substrate proteins and provides a physical environment optimized to promote and accelerate protein folding. This chain is Chaperonin GroEL, found in Acinetobacter baumannii (strain AB307-0294).